Consider the following 232-residue polypeptide: Purine nucleoside phosphorylase DeoD-type (232 aa).

His-4 contacts a purine D-ribonucleoside. Residues Gly-20, Arg-24, Arg-43, and 87-90 (RVGS) contribute to the phosphate site. A purine D-ribonucleoside contacts are provided by residues Glu-162, 178–180 (EME), and 202–203 (SD). The Proton donor role is filled by Asp-203.

Belongs to the PNP/UDP phosphorylase family. As to quaternary structure, homohexamer; trimer of homodimers.

The enzyme catalyses a purine D-ribonucleoside + phosphate = a purine nucleobase + alpha-D-ribose 1-phosphate. It carries out the reaction a purine 2'-deoxy-D-ribonucleoside + phosphate = a purine nucleobase + 2-deoxy-alpha-D-ribose 1-phosphate. Its function is as follows. Catalyzes the reversible phosphorolytic breakdown of the N-glycosidic bond in the beta-(deoxy)ribonucleoside molecules, with the formation of the corresponding free purine bases and pentose-1-phosphate. In Bacillus velezensis (strain DSM 23117 / BGSC 10A6 / LMG 26770 / FZB42) (Bacillus amyloliquefaciens subsp. plantarum), this protein is Purine nucleoside phosphorylase DeoD-type.